Here is a 347-residue protein sequence, read N- to C-terminus: MCFFLSSLCPVVAERCRSLLVPEDSGVDVENGGKRTIPKSRNGMLGEDMDDAAPLESGLSMSDMQMGSFSTLKAAKRAEVGGTGPKVGRPRKLSVYNPREMSDGNPGEDCLVVGPSATVSHSEGLSASGKRRKQHLPFTVDDLDIMCGVPSPRSGAPCRQPLTCKSHSISSKRAVTGRRKPFDALLQDFKDNNSRKSQQADIPRPLATKVYCSGHSQRMRAVITSLYRESISGRSSLPQNEQTLALDANPQQQQQQHTLMSLNKVSECWWIWIKTPFCSGISMTQVRTTEGGDKVEVVLYAAAHLPAFTARRLSGYSLQRNQQAAHSGPIHVARSTLPFENPDFTGV.

Residues 1–13 form the signal peptide; sequence MCFFLSSLCPVVA. Residues 77–106 form a disordered region; that stretch reads RAEVGGTGPKVGRPRKLSVYNPREMSDGNP. In terms of domain architecture, SCA7 spans 134-201; sequence QHLPFTVDDL…NNSRKSQQAD (68 aa).

This Selaginella moellendorffii (Spikemoss) protein is SCA7 domain-containing protein SELMODRAFT_439258.